The primary structure comprises 322 residues: Sideroflexin-1 (322 aa).

Residue Ser-2 is modified to N-acetylserine. Over 2 to 102 (SGELPPNINI…MSAQVPMNMT (101 aa)) the chain is Mitochondrial matrix. A helical transmembrane segment spans residues 103–120 (ITGCMMTFYRTTPAVLFW). The Mitochondrial intermembrane segment spans residues 121–146 (QWVNQSFNAVVNYTNRSGDAPLTVNE). Residues 147 to 167 (LGTAYVSATTGAVATALGLNA) form a helical membrane-spanning segment. Topologically, residues 168-174 (LTKRVSP) are mitochondrial matrix. Residues 175 to 195 (LVGRFVPFAAVAAANCINIPL) traverse the membrane as a helical segment. Residues 196 to 228 (MRQRELKVGIPVTDENGNRLGESASAAKQAITQ) lie on the Mitochondrial intermembrane side of the membrane. Residues 229–249 (VVVSRILMAAPGMAIPPFIMN) form a helical membrane-spanning segment. Over 250 to 266 (TLEKKAFLKRFPWMSAP) the chain is Mitochondrial matrix. The chain crosses the membrane as a helical span at residues 267–287 (VQVGIVGFCLVFATPLCCALF). At 288 to 322 (PQKSSMSVTSLEAELQARIRETYPELRRVYFNKGL) the chain is on the mitochondrial intermembrane side.

The protein belongs to the sideroflexin family.

It localises to the mitochondrion inner membrane. It carries out the reaction L-serine(in) = L-serine(out). It catalyses the reaction L-alanine(in) = L-alanine(out). The catalysed reaction is L-cysteine(in) = L-cysteine(out). Functionally, amino acid transporter importing serine, an essential substrate of the mitochondrial branch of the one-carbon pathway, into mitochondria. Mitochondrial serine is then converted to glycine and formate, which exits to the cytosol where it is used to generate the charged folates that serve as one-carbon donors. May also transport other amino acids including alanine and cysteine. The chain is Sideroflexin-1 (SFXN1) from Ovis aries (Sheep).